A 150-amino-acid polypeptide reads, in one-letter code: D-aminoacyl-tRNA deacylase (150 aa).

The short motif at 138-139 (GP) is the Gly-cisPro motif, important for rejection of L-amino acids element.

This sequence belongs to the DTD family. In terms of assembly, homodimer.

The protein localises to the cytoplasm. The enzyme catalyses glycyl-tRNA(Ala) + H2O = tRNA(Ala) + glycine + H(+). The catalysed reaction is a D-aminoacyl-tRNA + H2O = a tRNA + a D-alpha-amino acid + H(+). Its function is as follows. An aminoacyl-tRNA editing enzyme that deacylates mischarged D-aminoacyl-tRNAs. Also deacylates mischarged glycyl-tRNA(Ala), protecting cells against glycine mischarging by AlaRS. Acts via tRNA-based rather than protein-based catalysis; rejects L-amino acids rather than detecting D-amino acids in the active site. By recycling D-aminoacyl-tRNA to D-amino acids and free tRNA molecules, this enzyme counteracts the toxicity associated with the formation of D-aminoacyl-tRNA entities in vivo and helps enforce protein L-homochirality. The protein is D-aminoacyl-tRNA deacylase of Salinibacter ruber (strain DSM 13855 / M31).